A 23-amino-acid polypeptide reads, in one-letter code: Coenzyme PQQ synthesis protein A (23 aa).

The pyrroloquinoline quinone (Glu-Tyr) cross-link spans 15-19 (EVTMY).

The protein belongs to the PqqA family.

It participates in cofactor biosynthesis; pyrroloquinoline quinone biosynthesis. Required for coenzyme pyrroloquinoline quinone (PQQ) biosynthesis. PQQ is probably formed by cross-linking a specific glutamate to a specific tyrosine residue and excising these residues from the peptide. The chain is Coenzyme PQQ synthesis protein A from Ectopseudomonas mendocina (strain ymp) (Pseudomonas mendocina).